Here is a 474-residue protein sequence, read N- to C-terminus: Vitamin D-binding protein (474 aa).

A signal peptide spans 1–16 (MKRVLVLLLAVAFGHA). Albumin domains are found at residues 17–208 (LERG…QLKH), 209–394 (LSLL…LLKK), and 395–474 (ELSS…KNIL). Cystine bridges form between cysteine 29–cysteine 75, cysteine 74–cysteine 83, cysteine 96–cysteine 112, cysteine 111–cysteine 122, cysteine 145–cysteine 190, cysteine 189–cysteine 198, cysteine 220–cysteine 266, cysteine 265–cysteine 273, cysteine 286–cysteine 300, cysteine 299–cysteine 311, cysteine 335–cysteine 376, cysteine 375–cysteine 384, cysteine 407–cysteine 453, and cysteine 452–cysteine 462.

It belongs to the ALB/AFP/VDB family. In terms of assembly, associates with membrane-bound immunoglobulin on the surface of B-lymphocytes and with IgG Fc receptor on the membranes of T-lymphocytes. Interacts with LRP2; the interaction is required for renal uptake of GC in complex with 25-hydroxyvitamin D3. Allele GC*1S is O-glycosylated at Thr-436. The trisaccharide sugar moiety can be modified by the successive removal of neuraminic acid and galactose leaving an O-mceeN-acetyl-galactosamine. This conversion is thought to produce a macrophage-activating factor (Gc-MAF). Only a minor proportion of plasma GC is O-glycosylated. The potential N-glycosylation site predicted at Asn-288 is thought to be nonglycosylated. As to expression, expressed in the liver. Found in plasma, ascites, cerebrospinal fluid and urine.

The protein resides in the secreted. Involved in vitamin D transport and storage, scavenging of extracellular G-actin, enhancement of the chemotactic activity of C5 alpha for neutrophils in inflammation and macrophage activation. The sequence is that of Vitamin D-binding protein (GC) from Homo sapiens (Human).